Here is a 25-residue protein sequence, read N- to C-terminus: Cytochrome c oxidase polypeptide VIIc (25 aa).

The disordered stretch occupies residues 1 to 25 (SHYSEGPGQNLPFSVQNKXRLLGMM).

It belongs to the cytochrome c oxidase VIIc family. Component of the cytochrome c oxidase (complex IV, CIV), a multisubunit enzyme composed of 14 subunits. The complex is composed of a catalytic core of 3 subunits MT-CO1, MT-CO2 and MT-CO3, encoded in the mitochondrial DNA, and 11 supernumerary subunits COX4I, COX5A, COX5B, COX6A, COX6B, COX6C, COX7A, COX7B, COX7C, COX8 and NDUFA4, which are encoded in the nuclear genome. The complex exists as a monomer or a dimer and forms supercomplexes (SCs) in the inner mitochondrial membrane with NADH-ubiquinone oxidoreductase (complex I, CI) and ubiquinol-cytochrome c oxidoreductase (cytochrome b-c1 complex, complex III, CIII), resulting in different assemblies (supercomplex SCI(1)III(2)IV(1) and megacomplex MCI(2)III(2)IV(2)). Interacts with RAB5IF.

It localises to the mitochondrion inner membrane. It functions in the pathway energy metabolism; oxidative phosphorylation. In terms of biological role, component of the cytochrome c oxidase, the last enzyme in the mitochondrial electron transport chain which drives oxidative phosphorylation. The respiratory chain contains 3 multisubunit complexes succinate dehydrogenase (complex II, CII), ubiquinol-cytochrome c oxidoreductase (cytochrome b-c1 complex, complex III, CIII) and cytochrome c oxidase (complex IV, CIV), that cooperate to transfer electrons derived from NADH and succinate to molecular oxygen, creating an electrochemical gradient over the inner membrane that drives transmembrane transport and the ATP synthase. Cytochrome c oxidase is the component of the respiratory chain that catalyzes the reduction of oxygen to water. Electrons originating from reduced cytochrome c in the intermembrane space (IMS) are transferred via the dinuclear copper A center (CU(A)) of subunit 2 and heme A of subunit 1 to the active site in subunit 1, a binuclear center (BNC) formed by heme A3 and copper B (CU(B)). The BNC reduces molecular oxygen to 2 water molecules using 4 electrons from cytochrome c in the IMS and 4 protons from the mitochondrial matrix. This Oncorhynchus mykiss (Rainbow trout) protein is Cytochrome c oxidase polypeptide VIIc.